The chain runs to 206 residues: Histidine biosynthesis bifunctional protein HisIE (206 aa).

The segment at 1-117 (MCNEPATSDV…SCFPAAPGQF (117 aa)) is phosphoribosyl-AMP cyclohydrolase. The tract at residues 118-206 (LGALDALVAE…AVTVLEARHR (89 aa)) is phosphoribosyl-ATP pyrophosphohydrolase.

The protein in the N-terminal section; belongs to the PRA-CH family. In the C-terminal section; belongs to the PRA-PH family.

The protein localises to the cytoplasm. It catalyses the reaction 1-(5-phospho-beta-D-ribosyl)-ATP + H2O = 1-(5-phospho-beta-D-ribosyl)-5'-AMP + diphosphate + H(+). The catalysed reaction is 1-(5-phospho-beta-D-ribosyl)-5'-AMP + H2O = 1-(5-phospho-beta-D-ribosyl)-5-[(5-phospho-beta-D-ribosylamino)methylideneamino]imidazole-4-carboxamide. The protein operates within amino-acid biosynthesis; L-histidine biosynthesis; L-histidine from 5-phospho-alpha-D-ribose 1-diphosphate: step 2/9. It participates in amino-acid biosynthesis; L-histidine biosynthesis; L-histidine from 5-phospho-alpha-D-ribose 1-diphosphate: step 3/9. This Xylella fastidiosa (strain Temecula1 / ATCC 700964) protein is Histidine biosynthesis bifunctional protein HisIE (hisI).